Consider the following 216-residue polypeptide: Eukaryotic translation initiation factor 3 subunit K (216 aa).

The PCI domain maps to 40 to 202; that stretch reads YDLDANLAVL…HIKSKNIAEK (163 aa).

This sequence belongs to the eIF-3 subunit K family. In terms of assembly, component of the eukaryotic translation initiation factor 3 (eIF-3) complex.

Its subcellular location is the cytoplasm. In terms of biological role, component of the eukaryotic translation initiation factor 3 (eIF-3) complex, which is involved in protein synthesis of a specialized repertoire of mRNAs and, together with other initiation factors, stimulates binding of mRNA and methionyl-tRNAi to the 40S ribosome. The eIF-3 complex specifically targets and initiates translation of a subset of mRNAs involved in cell proliferation. The polypeptide is Eukaryotic translation initiation factor 3 subunit K (Nematostella vectensis (Starlet sea anemone)).